Reading from the N-terminus, the 286-residue chain is Main hemagglutinin component type C (286 aa).

A 1-alpha repeat occupies 2 to 55 (SQTNANDLRNNEVFFISPSNNTNKVLDKISQSEVKLWNKLSGANQKWRLIYDTN). Ricin B-type lectin domains follow at residues 12-140 (NEVF…FKFS) and 180-284 (DSSR…WIIN). The 1-beta repeat unit spans residues 56–100 (KQAYKIKVMDNTSLILTWNAPLSSVSVKTDTNGDNQYWYLLQNYI). A 1-gamma repeat occupies 101–148 (SRNVIIRNYMNPNLVLQYNIDDTLMVSTQTSSSNQFFKFSNCIYEALN). A 2-alpha repeat occupies 149–193 (NRNCKLQTQLNSDRFLSKNLNSQIIVLWQWFDSSRQKWIIEYNET). Residues 167–183 (NLNSQIIVLWQWFDSSR) are sugar-binding site 1. One copy of the 2-beta repeat lies at 194 to 239 (KSAYTLKCQENNRYLTWIQNSNNYVETYQSTDSLIQYWNINYLDND). One copy of the 2-gamma repeat lies at 240–286 (ASKYILYNLQDTNRVLDVYNSQIANGTHVIVDSYHGNTNQQWIINLI). Residues 256–279 (DVYNSQIANGTHVIVDSYHGNTNQ) form a sugar-binding site 2 region.

As to quaternary structure, botulinum toxins are produced as progenitor toxins of large molecular sizes of 12S (M toxin) and 16S (L toxin). M toxin consists of a non-toxic, non-hemagglutinin component (NTNHA) and the neurotoxin. L toxin consists of the M toxin and the 3 subcomponents of hemagglutinin (HA). HA is composed of subcomponents of 70, 33, and 17 kDa. The 70 kDa subcomponent undergoes proteolytic processing and is split into HA-55 (also called HA-53 and HA3b) and HA-22-23 (also called HA3a). The stoichiometry of the whole complex has been modeled as one BoNT/C, one NTNHA, three HA-70, six HA-33 and three HA-17.

The protein resides in the secreted. In terms of biological role, agglutinates human erythrocytes. The hemagglutinin (HA) component of the progenitor toxin protects the structural integrity of botulinum neurotoxin; may increase internalization of the neurotoxin into the bloodstream of the host. The hemagglutinin (HA) component is involved in binding to the upper small intestine through interactions with glycolipids and glycoproteins containing sialic acid moieties. Binds galactose or oligosaccharides with galactose at their non-reducing end. Binds eukaryotic host mucins; binding is inhibited by N-acetyl-beta-neuraminic acid, N-acetyl-D-galactosamine, galactose, and methyl N-acetyl-beta-neuraminic acid. Binds N-acetyl-beta-neuraminic acid, N-acetyl-D-galactosamine and galactose (but not glucose) via 2 sites. This Clostridium botulinum C (Clostridium botulinum C bacteriophage) protein is Main hemagglutinin component type C.